We begin with the raw amino-acid sequence, 295 residues long: Pyridoxal 5'-phosphate synthase subunit PdxS (295 aa).

D25 contacts D-ribose 5-phosphate. Catalysis depends on K82, which acts as the Schiff-base intermediate with D-ribose 5-phosphate. G154 lines the D-ribose 5-phosphate pocket. R166 is a D-glyceraldehyde 3-phosphate binding site. Residues G215 and 236–237 (GS) contribute to the D-ribose 5-phosphate site.

The protein belongs to the PdxS/SNZ family. In the presence of PdxT, forms a dodecamer of heterodimers.

It carries out the reaction aldehydo-D-ribose 5-phosphate + D-glyceraldehyde 3-phosphate + L-glutamine = pyridoxal 5'-phosphate + L-glutamate + phosphate + 3 H2O + H(+). Its pathway is cofactor biosynthesis; pyridoxal 5'-phosphate biosynthesis. Its function is as follows. Catalyzes the formation of pyridoxal 5'-phosphate from ribose 5-phosphate (RBP), glyceraldehyde 3-phosphate (G3P) and ammonia. The ammonia is provided by the PdxT subunit. Can also use ribulose 5-phosphate and dihydroxyacetone phosphate as substrates, resulting from enzyme-catalyzed isomerization of RBP and G3P, respectively. The sequence is that of Pyridoxal 5'-phosphate synthase subunit PdxS from Dictyoglomus turgidum (strain DSM 6724 / Z-1310).